Here is a 445-residue protein sequence, read N- to C-terminus: 4-hydroxyphenylpyruvate dioxygenase (445 aa).

Over residues 1–11 (MGHQNAAVSEN) the composition is skewed to polar residues. The interval 1–20 (MGHQNAAVSENQNHDDGAAS) is disordered. VOC domains lie at 46–192 (RFHH…YVSY) and 223–383 (RLDH…IFTK). Fe cation is bound by residues H226, H308, and E394.

It belongs to the 4HPPD family. As to quaternary structure, homodimer. Fe cation is required as a cofactor.

It is found in the cytoplasm. The catalysed reaction is 3-(4-hydroxyphenyl)pyruvate + O2 = homogentisate + CO2. It participates in amino-acid degradation; L-phenylalanine degradation; acetoacetate and fumarate from L-phenylalanine: step 3/6. Its pathway is cofactor biosynthesis; prenylquinone biosynthesis. In terms of biological role, catalyzes the conversion of 4-hydroxyphenylpyruvic acid to homogentisic acid, one of the steps in tyrosine catabolism. In Arabidopsis thaliana (Mouse-ear cress), this protein is 4-hydroxyphenylpyruvate dioxygenase (HPD).